The primary structure comprises 320 residues: Aristolochene synthase (320 aa).

A compositionally biased stretch (polar residues) spans 1–14; the sequence is MKKPNGTNGASSSL. The disordered stretch occupies residues 1-20; the sequence is MKKPNGTNGASSSLEPPPST. Mg(2+) contacts are provided by D90, N219, S223, and E227. Positions 314 and 315 each coordinate (2E,6E)-farnesyl diphosphate.

The protein belongs to the terpene synthase family. In terms of assembly, homodimer. It depends on Mg(2+) as a cofactor.

The enzyme catalyses (2E,6E)-farnesyl diphosphate = (+)-aristolochene + diphosphate. Its pathway is sesquiterpene biosynthesis; aristolochene biosynthesis; aristolochene from farnesyl diphosphate: step 1/1. Functionally, catalyzes the cyclization of trans,trans-farnesyl diphosphate (FPP) to the bicyclic sesquiterpene aristolochene. Produces germacrene A as an enzyme-bound intermediate that is not released by the enzyme, but is further cyclized to produce aristolochene. Aristolochene is the likely parent compound for a number of sesquiterpenoid toxins produced by filamentous fungi. The sequence is that of Aristolochene synthase (Ari1) from Aspergillus terreus.